A 236-amino-acid polypeptide reads, in one-letter code: Leucyl/phenylalanyl-tRNA--protein transferase (236 aa).

The protein belongs to the L/F-transferase family.

The protein resides in the cytoplasm. It catalyses the reaction N-terminal L-lysyl-[protein] + L-leucyl-tRNA(Leu) = N-terminal L-leucyl-L-lysyl-[protein] + tRNA(Leu) + H(+). The catalysed reaction is N-terminal L-arginyl-[protein] + L-leucyl-tRNA(Leu) = N-terminal L-leucyl-L-arginyl-[protein] + tRNA(Leu) + H(+). It carries out the reaction L-phenylalanyl-tRNA(Phe) + an N-terminal L-alpha-aminoacyl-[protein] = an N-terminal L-phenylalanyl-L-alpha-aminoacyl-[protein] + tRNA(Phe). Functionally, functions in the N-end rule pathway of protein degradation where it conjugates Leu, Phe and, less efficiently, Met from aminoacyl-tRNAs to the N-termini of proteins containing an N-terminal arginine or lysine. This chain is Leucyl/phenylalanyl-tRNA--protein transferase, found in Aliivibrio salmonicida (strain LFI1238) (Vibrio salmonicida (strain LFI1238)).